The primary structure comprises 302 residues: Nitric oxide synthase-interacting protein (302 aa).

Ser36 is modified (phosphoserine). The tract at residues 55–75 (DPVVTPDGYLYEREAILEYIL) is U-box-like. The Nuclear localization signal motif lies at 78–101 (KKEIARQMKAYEKQRGARREEQKE). The tract at residues 126-156 (LNPFTPKAASAGNGPDDAQPGSSAGPAGKDK) is disordered.

The protein belongs to the NOSIP family. Interacts with NOS1 and NOS3. Interacts with PP2A holoenzyme, containing PPP2CA, PPP2CB, PPP2R1A and PPP2R2A subunits.

Its subcellular location is the cytoplasm. It localises to the nucleus. The enzyme catalyses S-ubiquitinyl-[E2 ubiquitin-conjugating enzyme]-L-cysteine + [acceptor protein]-L-lysine = [E2 ubiquitin-conjugating enzyme]-L-cysteine + N(6)-ubiquitinyl-[acceptor protein]-L-lysine.. Functionally, E3 ubiquitin-protein ligase that is essential for proper development of the forebrain, the eye, and the face. Catalyzes monoubiquitination of serine/threonine-protein phosphatase 2A (PP2A) catalytic subunit PPP2CA/PPP2CB. Negatively regulates nitric oxide production by inducing NOS1 and NOS3 translocation to actin cytoskeleton and inhibiting their enzymatic activity. The polypeptide is Nitric oxide synthase-interacting protein (NOSIP) (Bos taurus (Bovine)).